Here is a 543-residue protein sequence, read N- to C-terminus: CTP synthase (543 aa).

The tract at residues methionine 1–leucine 265 is amidoligase domain. A CTP-binding site is contributed by serine 13. Serine 13 contacts UTP. An ATP-binding site is contributed by serine 14–isoleucine 19. Residue tyrosine 54 participates in L-glutamine binding. Aspartate 71 serves as a coordination point for ATP. 2 residues coordinate Mg(2+): aspartate 71 and glutamate 139. Residues aspartate 146–glutamate 148, lysine 186–glutamine 191, and lysine 222 contribute to the CTP site. UTP-binding positions include lysine 186–glutamine 191 and lysine 222. Positions arginine 291–leucine 542 constitute a Glutamine amidotransferase type-1 domain. Glycine 354 contacts L-glutamine. The active-site Nucleophile; for glutamine hydrolysis is cysteine 381. Residues phenylalanine 382–glutamine 385, glutamate 405, and arginine 470 each bind L-glutamine. Active-site residues include histidine 515 and glutamate 517.

Belongs to the CTP synthase family. Homotetramer.

The enzyme catalyses UTP + L-glutamine + ATP + H2O = CTP + L-glutamate + ADP + phosphate + 2 H(+). It catalyses the reaction L-glutamine + H2O = L-glutamate + NH4(+). The catalysed reaction is UTP + NH4(+) + ATP = CTP + ADP + phosphate + 2 H(+). It functions in the pathway pyrimidine metabolism; CTP biosynthesis via de novo pathway; CTP from UDP: step 2/2. Its activity is regulated as follows. Allosterically activated by GTP, when glutamine is the substrate; GTP has no effect on the reaction when ammonia is the substrate. The allosteric effector GTP functions by stabilizing the protein conformation that binds the tetrahedral intermediate(s) formed during glutamine hydrolysis. Inhibited by the product CTP, via allosteric rather than competitive inhibition. In terms of biological role, catalyzes the ATP-dependent amination of UTP to CTP with either L-glutamine or ammonia as the source of nitrogen. Regulates intracellular CTP levels through interactions with the four ribonucleotide triphosphates. The protein is CTP synthase of Gluconacetobacter diazotrophicus (strain ATCC 49037 / DSM 5601 / CCUG 37298 / CIP 103539 / LMG 7603 / PAl5).